The primary structure comprises 384 residues: MGMQMKNFKKMMTLMALCLSVAITTSGYATTLPDIPEPLKNGTGAIDNNGVIYVGLGTAGTSWYKIDLKKQHKDWERIKSFPGGAREQSVSVFLNDKLYVFGGVGKKNSESPLQVYSDVYKYSPVKNTWQKVDTISPVGLTGHTGVKLNETMVLITGGVNEHIFDKYFIDIAAADESEKNKVIYNYFNKPAKDYFFNKIVFIYNAKENTWKNAGELPGAGTAGSSSVMENNFLMLINGELKPGLRTDVIYRAMWDNDKLTWLKNSQLPPSPGEQQQEGLAGAFSGYSHGVLLVGGGANFPGAKQNYTNGKFYSHEGINKKWRDEVYGLINGHWQYMGKMKQPLGYGVSVSYGDEVFLIGGENAKGKPVSSVTSFTMRDGNLLIK.

An N-terminal signal peptide occupies residues 1–29 (MGMQMKNFKKMMTLMALCLSVAITTSGYA). Kelch repeat units lie at residues 51-95 (VIYV…VFLN), 97-149 (KLYV…VKLN), 151-184 (TMVL…KVIY), 185-230 (NYFN…VMEN), 233-282 (LMLI…LAGA), 304-353 (QNYT…SYGD), and 355-384 (VFLI…LLIK). The active-site Proton acceptor is Glu239.

It belongs to the NanM family. Homodimer.

It localises to the periplasm. It carries out the reaction N-acetyl-alpha-neuraminate = N-acetyl-beta-neuraminate. Its function is as follows. Converts alpha-N-acetylneuranimic acid (Neu5Ac) to the beta-anomer, accelerating the equilibrium between the alpha- and beta-anomers. Probably facilitates sialidase-negative bacteria to compete successfully for limited amounts of extracellular Neu5Ac, which is likely taken up in the beta-anomer. In addition, the rapid removal of sialic acid from solution might be advantageous to the bacterium to damp down host responses. The protein is N-acetylneuraminate epimerase of Salmonella typhi.